Here is a 413-residue protein sequence, read N- to C-terminus: Probable tRNA sulfurtransferase (413 aa).

Residues 61–171 form the THUMP domain; sequence TRVLDRVTRV…EDGTYIFTEK (111 aa). Residues 189 to 190, 214 to 215, arginine 275, glycine 297, and glutamine 306 each bind ATP; these read ML and HF.

Belongs to the ThiI family.

It is found in the cytoplasm. The catalysed reaction is [ThiI sulfur-carrier protein]-S-sulfanyl-L-cysteine + a uridine in tRNA + 2 reduced [2Fe-2S]-[ferredoxin] + ATP + H(+) = [ThiI sulfur-carrier protein]-L-cysteine + a 4-thiouridine in tRNA + 2 oxidized [2Fe-2S]-[ferredoxin] + AMP + diphosphate. The enzyme catalyses [ThiS sulfur-carrier protein]-C-terminal Gly-Gly-AMP + S-sulfanyl-L-cysteinyl-[cysteine desulfurase] + AH2 = [ThiS sulfur-carrier protein]-C-terminal-Gly-aminoethanethioate + L-cysteinyl-[cysteine desulfurase] + A + AMP + 2 H(+). Its pathway is cofactor biosynthesis; thiamine diphosphate biosynthesis. In terms of biological role, catalyzes the ATP-dependent transfer of a sulfur to tRNA to produce 4-thiouridine in position 8 of tRNAs, which functions as a near-UV photosensor. Also catalyzes the transfer of sulfur to the sulfur carrier protein ThiS, forming ThiS-thiocarboxylate. This is a step in the synthesis of thiazole, in the thiamine biosynthesis pathway. The sulfur is donated as persulfide by IscS. The polypeptide is Probable tRNA sulfurtransferase (Natranaerobius thermophilus (strain ATCC BAA-1301 / DSM 18059 / JW/NM-WN-LF)).